A 206-amino-acid chain; its full sequence is Thiamine-phosphate synthase (206 aa).

Residues 37 to 41 and asparagine 69 contribute to the 4-amino-2-methyl-5-(diphosphooxymethyl)pyrimidine site; that span reads QYRNK. Mg(2+)-binding residues include aspartate 70 and aspartate 89. Serine 108 serves as a coordination point for 4-amino-2-methyl-5-(diphosphooxymethyl)pyrimidine. 2-[(2R,5Z)-2-carboxy-4-methylthiazol-5(2H)-ylidene]ethyl phosphate is bound at residue 135 to 137; that stretch reads SST. Lysine 138 provides a ligand contact to 4-amino-2-methyl-5-(diphosphooxymethyl)pyrimidine. Residues glycine 165 and 185 to 186 each bind 2-[(2R,5Z)-2-carboxy-4-methylthiazol-5(2H)-ylidene]ethyl phosphate; that span reads IS.

Belongs to the thiamine-phosphate synthase family. Mg(2+) is required as a cofactor.

It carries out the reaction 2-[(2R,5Z)-2-carboxy-4-methylthiazol-5(2H)-ylidene]ethyl phosphate + 4-amino-2-methyl-5-(diphosphooxymethyl)pyrimidine + 2 H(+) = thiamine phosphate + CO2 + diphosphate. The enzyme catalyses 2-(2-carboxy-4-methylthiazol-5-yl)ethyl phosphate + 4-amino-2-methyl-5-(diphosphooxymethyl)pyrimidine + 2 H(+) = thiamine phosphate + CO2 + diphosphate. It catalyses the reaction 4-methyl-5-(2-phosphooxyethyl)-thiazole + 4-amino-2-methyl-5-(diphosphooxymethyl)pyrimidine + H(+) = thiamine phosphate + diphosphate. The protein operates within cofactor biosynthesis; thiamine diphosphate biosynthesis; thiamine phosphate from 4-amino-2-methyl-5-diphosphomethylpyrimidine and 4-methyl-5-(2-phosphoethyl)-thiazole: step 1/1. Its function is as follows. Condenses 4-methyl-5-(beta-hydroxyethyl)thiazole monophosphate (THZ-P) and 2-methyl-4-amino-5-hydroxymethyl pyrimidine pyrophosphate (HMP-PP) to form thiamine monophosphate (TMP). The chain is Thiamine-phosphate synthase from Azoarcus sp. (strain BH72).